Reading from the N-terminus, the 515-residue chain is Fatty acyl-CoA reductase 2 (515 aa).

At methionine 1 to asparagine 465 the chain is on the cytoplasmic side. A helical transmembrane segment spans residues isoleucine 466–alanine 484. Residues arginine 485 to valine 515 are Peroxisomal-facing.

This sequence belongs to the fatty acyl-CoA reductase family.

It localises to the peroxisome membrane. The enzyme catalyses a long-chain fatty acyl-CoA + 2 NADPH + 2 H(+) = a long-chain primary fatty alcohol + 2 NADP(+) + CoA. It catalyses the reaction hexadecanoyl-CoA + 2 NADPH + 2 H(+) = hexadecan-1-ol + 2 NADP(+) + CoA. It carries out the reaction octadecanoyl-CoA + 2 NADPH + 2 H(+) = octadecan-1-ol + 2 NADP(+) + CoA. The catalysed reaction is a very long-chain fatty acyl-CoA + 2 NADPH + 2 H(+) = a very long-chain primary fatty alcohol + 2 NADP(+) + CoA. The enzyme catalyses an ultra-long-chain fatty acyl-CoA + 2 NADPH + 2 H(+) = an ultra long-chain primary fatty alcohol + 2 NADP(+) + CoA. It catalyses the reaction eicosanoyl-CoA + 2 NADPH + 2 H(+) = eicosan-1-ol + 2 NADP(+) + CoA. It carries out the reaction docosanoyl-CoA + 2 NADPH + 2 H(+) = docosan-1-ol + 2 NADP(+) + CoA. The catalysed reaction is tetracosanoyl-CoA + 2 NADPH + 2 H(+) = tetracosan-1-ol + 2 NADP(+) + CoA. The enzyme catalyses hexacosanoyl-CoA + 2 NADPH + 2 H(+) = hexacosan-1-ol + 2 NADP(+) + CoA. It catalyses the reaction octacosanoyl-CoA + 2 NADPH + 2 H(+) = octacosan-1-ol + 2 NADP(+) + CoA. It carries out the reaction triacontanoyl-CoA + 2 NADPH + 2 H(+) = triacontan-1-ol + 2 NADP(+) + CoA. The catalysed reaction is 18-methylnonadecanoyl-CoA + 2 NADPH + 2 H(+) = 18-methylnonadecan-1-ol + 2 NADP(+) + CoA. The enzyme catalyses 20-methylheneicosanoyl-CoA + 2 NADPH + 2 H(+) = 20-methylheneicosan-1-ol + 2 NADP(+) + CoA. It catalyses the reaction 22-methyltricosanoyl-CoA + 2 NADPH + 2 H(+) = 22-methyltricosan-1-ol + 2 NADP(+) + CoA. It carries out the reaction 24-methylpentacosanoyl-CoA + 2 NADPH + 2 H(+) = 24-methylpentacosan-1-ol + 2 NADP(+) + CoA. Catalyzes the reduction of saturated but not unsaturated C16 or C18 fatty acyl-CoA to fatty alcohols (FAls). A lower activity can be observed with shorter fatty acyl-CoA substrates. Can produce very long-chain and ultra long-chain FAls, regardless of whether they have a straight or branched chain. Involved in the production of ether lipids/plasmalogens and wax monoesters whose synthesis requires FAls as substrates. In Bos taurus (Bovine), this protein is Fatty acyl-CoA reductase 2.